Reading from the N-terminus, the 376-residue chain is MGHIRSIRLALAVAAVCTAASAAAGDAKFPPLGPLPPVPVPADNPMTADKVALGKQLFWDNRLSGDGSTPCVSCHLPALGWGDGGAISRGYPGTKHWRNSQTIVNSAYYNKLFWAGSVTSLEAQAPSAAEGGVAGNGDRSLMEMRLRFIPEYVAAFKNVFGADWPRMTQAYAAIAAYQRTVVSDATRVPFDRWQAGDKAAMSAEAQRGYALFSGKAGCIACHNGPLASDQRFYNLGLPEHPDLAEDPLLQITHRWEQYQKGTTEDGYRHADRDKGYYYQTKNPKDIGKFRTPSLREVKYTGPYMHNGTLATLDEVVAFYNAGGGTAPGKTDKLKPLGLTEQESKDLVAFVEALSMTEPLIHDDPKLPGDYQPLATQ.

A signal peptide spans 1-24 (MGHIRSIRLALAVAAVCTAASAAA). Cytochrome c domains lie at 49-157 (DKVA…AAFK) and 203-354 (AEAQ…EALS). Heme c contacts are provided by Cys71, Cys74, His75, Cys218, Cys221, and His222.

The iodate reductase (Idr) complex is composed of a molybdopterin-dependent iodate reductase (IdrA and IdrB subunits) and two associated peroxidases (IdrP1 and IdrP2). Heme c is required as a cofactor.

The protein localises to the periplasm. The enzyme catalyses 2 Fe(II)-[cytochrome c] + H2O2 + 2 H(+) = 2 Fe(III)-[cytochrome c] + 2 H2O. Involved in iodate respiration. May play a critical role in detoxification of inadvertent H(2)O(2) generated by the iodate reductase IdrA/IdrB. The polypeptide is Cytochrome-c peroxidase IdrP1 (Denitromonas iodatirespirans).